The sequence spans 136 residues: ATP synthase epsilon chain (136 aa).

The disordered stretch occupies residues 106–136; the sequence is MEGQPSSPEKLKAQQQLNEARARLQASKTAD.

This sequence belongs to the ATPase epsilon chain family. As to quaternary structure, F-type ATPases have 2 components, CF(1) - the catalytic core - and CF(0) - the membrane proton channel. CF(1) has five subunits: alpha(3), beta(3), gamma(1), delta(1), epsilon(1). CF(0) has three main subunits: a, b and c.

The protein resides in the cellular thylakoid membrane. Produces ATP from ADP in the presence of a proton gradient across the membrane. The sequence is that of ATP synthase epsilon chain from Synechococcus sp. (strain CC9605).